The following is a 158-amino-acid chain: Large ribosomal subunit protein eL24 (158 aa).

Over residues 98–146 (LDASHKKAEAEKAVRELKQKKANDIEKKRADRKLQGKDVKAAKKAETKK) the composition is skewed to basic and acidic residues. Residues 98–158 (LDASHKKAEA…QPVGAKGGKK (61 aa)) form a disordered region.

It belongs to the eukaryotic ribosomal protein eL24 family.

This Tetrahymena thermophila (strain SB210) protein is Large ribosomal subunit protein eL24 (RPL24).